The chain runs to 211 residues: Probable septum site-determining protein MinC (211 aa).

The protein belongs to the MinC family. In terms of assembly, interacts with MinD and FtsZ.

In terms of biological role, cell division inhibitor that blocks the formation of polar Z ring septums. Rapidly oscillates between the poles of the cell to destabilize FtsZ filaments that have formed before they mature into polar Z rings. Prevents FtsZ polymerization. The protein is Probable septum site-determining protein MinC of Clostridium acetobutylicum (strain ATCC 824 / DSM 792 / JCM 1419 / IAM 19013 / LMG 5710 / NBRC 13948 / NRRL B-527 / VKM B-1787 / 2291 / W).